The chain runs to 396 residues: Transcription factor E2FC (396 aa).

A compositionally biased stretch (polar residues) spans 34–48 (PRYSSLTPSSTNRPF). Residues 34-57 (PRYSSLTPSSTNRPFSVSQSLPNS) form a disordered region. The DNA-binding element occupies 155–220 (RYDSSLGLLT…TTKNHIRWKG (66 aa)). Positions 226–268 (QKDLGDQISRLKSEVESMQSEESRLDDLIRERQEALRSLEEDD) form a coiled coil. A leucine-zipper region spans residues 236-264 (LKSEVESMQSEESRLDDLIRERQEALRSL). Residues 376–391 (DYWFESDAEVSLTDLW) are retinoblastoma protein binding.

It belongs to the E2F/DP family. As to quaternary structure, heterodimer with DP proteins. Interacts preferentially with DPB, but also with DPA. No interaction with DPB when phosphorylated. Interacts with SKP2A, CDKA-1 and maize retinoblastoma-related protein RBR1. Component of a DREAM-like complex which modulates a variety of developmentally regulated genes and of the mitotic genes in proliferating and differentiated cells. Interacts with MYB3R3 at later stages of leaves development. In terms of processing, phosphorylated by cyclin-dependent kinase. Phosphorylation is necessary to target E2FC for proteolysis. Expressed in meristematic areas, vascular tissues, apical part of the roots, cotyledons, upper region of the hypocotyls, trichomes, young flower buds and pollen grains.

It localises to the cytoplasm. Functionally, involved in transcriptional repression. May act by repressing E2F-regulated genes in mature differentiated cells, but is not an antagonist of E2FA. Restricts cell division and is involved in the coordination between cell proliferation and endoreduplication during development. May play a role during the transition from skotomorphogenesis to photomorphogenesis. Regulated by phosphorylation-dependent proteolysis via the protein-ubiquitin ligase SCF(SKP2A) complex. In Arabidopsis thaliana (Mouse-ear cress), this protein is Transcription factor E2FC (E2FC).